A 330-amino-acid chain; its full sequence is SUMO-activating enzyme subunit 1 (330 aa).

The protein belongs to the ubiquitin-activating E1 family. In terms of assembly, heterodimer of sae1 and sae2. The complex binds sumo via sae2.

Its subcellular location is the nucleus. Its pathway is protein modification; protein sumoylation. In terms of biological role, the dimeric enzyme acts as an E1 ligase for sumo. It mediates ATP-dependent activation of sumo and formation of a thioester with a conserved cysteine residue on sae2. The chain is SUMO-activating enzyme subunit 1 (sae1) from Dictyostelium discoideum (Social amoeba).